The following is a 334-amino-acid chain: YbbR-like domain-containing protein BB_0009 (334 aa).

A helical membrane pass occupies residues 22–38 (AISILIAILMFVAFNFN). YbbR-like domains follow at residues 43-128 (ITTE…NVLL) and 138-220 (VKIE…VVNI).

Its subcellular location is the membrane. The chain is YbbR-like domain-containing protein BB_0009 from Borreliella burgdorferi (strain ATCC 35210 / DSM 4680 / CIP 102532 / B31) (Borrelia burgdorferi).